The sequence spans 320 residues: ATP-dependent 6-phosphofructokinase (320 aa).

G12 provides a ligand contact to ATP. Residues 22 to 26 (RGVVR) and 55 to 60 (RYSVSD) contribute to the ADP site. Residues 73-74 (RF) and 103-106 (GDGS) contribute to the ATP site. D104 contributes to the Mg(2+) binding site. 126 to 128 (TID) contributes to the substrate binding site. D128 acts as the Proton acceptor in catalysis. R155 is a binding site for ADP. Substrate is bound by residues R163 and 170–172 (MGR). ADP contacts are provided by residues 186 to 188 (GCE), K212, and 214 to 216 (KKH). Substrate is bound by residues E223, R244, and 250 to 253 (HIQR).

This sequence belongs to the phosphofructokinase type A (PFKA) family. ATP-dependent PFK group I subfamily. Prokaryotic clade 'B1' sub-subfamily. As to quaternary structure, homotetramer. Requires Mg(2+) as cofactor.

The protein localises to the cytoplasm. It carries out the reaction beta-D-fructose 6-phosphate + ATP = beta-D-fructose 1,6-bisphosphate + ADP + H(+). Its pathway is carbohydrate degradation; glycolysis; D-glyceraldehyde 3-phosphate and glycerone phosphate from D-glucose: step 3/4. Allosterically activated by ADP and other diphosphonucleosides, and allosterically inhibited by phosphoenolpyruvate. Catalyzes the phosphorylation of D-fructose 6-phosphate to fructose 1,6-bisphosphate by ATP, the first committing step of glycolysis. The protein is ATP-dependent 6-phosphofructokinase of Enterobacter cloacae.